The sequence spans 155 residues: Ribosomal RNA large subunit methyltransferase H (155 aa).

S-adenosyl-L-methionine is bound by residues L72, G103, and 122–127 (LSDLTL).

It belongs to the RNA methyltransferase RlmH family. As to quaternary structure, homodimer.

It localises to the cytoplasm. It catalyses the reaction pseudouridine(1915) in 23S rRNA + S-adenosyl-L-methionine = N(3)-methylpseudouridine(1915) in 23S rRNA + S-adenosyl-L-homocysteine + H(+). Its function is as follows. Specifically methylates the pseudouridine at position 1915 (m3Psi1915) in 23S rRNA. The polypeptide is Ribosomal RNA large subunit methyltransferase H (Verminephrobacter eiseniae (strain EF01-2)).